A 157-amino-acid polypeptide reads, in one-letter code: Endoribonuclease YbeY (157 aa).

The Zn(2+) site is built by His114, His118, and His124.

It belongs to the endoribonuclease YbeY family. Requires Zn(2+) as cofactor.

Its subcellular location is the cytoplasm. Its function is as follows. Single strand-specific metallo-endoribonuclease involved in late-stage 70S ribosome quality control and in maturation of the 3' terminus of the 16S rRNA. The chain is Endoribonuclease YbeY from Yersinia pseudotuberculosis serotype O:1b (strain IP 31758).